The chain runs to 102 residues: ATP-dependent Clp protease adapter protein ClpS (102 aa).

The protein belongs to the ClpS family. As to quaternary structure, binds to the N-terminal domain of the chaperone ClpA.

Functionally, involved in the modulation of the specificity of the ClpAP-mediated ATP-dependent protein degradation. The protein is ATP-dependent Clp protease adapter protein ClpS of Shewanella sp. (strain ANA-3).